The sequence spans 691 residues: Threonine--tRNA ligase (691 aa).

The interval 1 to 22 (MSVPAQPAPGADGGDPRQPIRV) is disordered. A TGS domain is found at 1-73 (MSVPAQPAPG…DADAEVTPIA (73 aa)). The tract at residues 268 to 574 (DHRKLGVELD…LTEHYAGAFP (307 aa)) is catalytic. Positions 373, 424, and 551 each coordinate Zn(2+).

Belongs to the class-II aminoacyl-tRNA synthetase family. In terms of assembly, homodimer. It depends on Zn(2+) as a cofactor.

It localises to the cytoplasm. The catalysed reaction is tRNA(Thr) + L-threonine + ATP = L-threonyl-tRNA(Thr) + AMP + diphosphate + H(+). Its function is as follows. Catalyzes the attachment of threonine to tRNA(Thr) in a two-step reaction: L-threonine is first activated by ATP to form Thr-AMP and then transferred to the acceptor end of tRNA(Thr). Also edits incorrectly charged L-seryl-tRNA(Thr). The polypeptide is Threonine--tRNA ligase (Mycobacterium ulcerans (strain Agy99)).